Consider the following 359-residue polypeptide: Guanine nucleotide-binding protein G(q) subunit alpha (359 aa).

Residues Cys9 and Cys10 are each lipidated (S-palmitoyl cysteine). One can recognise a G-alpha domain in the interval 38-359; that stretch reads RELKLLLLGT…QLNLKEYNLV (322 aa). A G1 motif region spans residues 41–54; that stretch reads KLLLLGTGESGKST. GTP-binding residues include Ser50, Gly51, Lys52, Ser53, Thr54, Ser156, Leu180, Arg181, and Arg183. Position 53 (Ser53) interacts with Mg(2+). A G2 motif region spans residues 178–186; it reads DVLRVRVPT. Thr186 serves as a coordination point for Mg(2+). Residues 201-210 form a G3 motif region; it reads FRMVDVGGQR. 5-glutamyl histamine is present on Gln209. Residues 270-277 form a G4 motif region; sequence ILFLNKKD. GTP is bound by residues Asn274, Lys275, Asp277, and Ala331. Positions 329 to 334 are G5 motif; sequence TCATDT.

It belongs to the G-alpha family. G(q) subfamily. G proteins are composed of 3 units; alpha, beta and gamma. The alpha chain contains the guanine nucleotide binding site. Interacts (GDP-bound form) with RIC8A (via C-terminus); promoting GNAQ folding and association with the plasma membrane. Binds NHERF1. Forms a complex with PECAM1 and BDKRB2. Interacts with GAS2L2. Post-translationally, palmitoylated by ZDHHC3 and ZDHHC7. Palmitoylation occurs in the Golgi and participates in the localization of GNAQ to the plasma membrane. Histaminylated at Gln-209 residues by TGM2.

It localises to the cell membrane. The protein localises to the golgi apparatus. It is found in the nucleus. The protein resides in the nucleus membrane. It carries out the reaction GTP + H2O = GDP + phosphate + H(+). Its function is as follows. Guanine nucleotide-binding proteins (G proteins) function as transducers downstream of G protein-coupled receptors (GPCRs) in numerous signaling cascades. The alpha chain contains the guanine nucleotide binding site and alternates between an active, GTP-bound state and an inactive, GDP-bound state. Signaling by an activated GPCR promotes GDP release and GTP binding. The alpha subunit has a low GTPase activity that converts bound GTP to GDP, thereby terminating the signal. Both GDP release and GTP hydrolysis are modulated by numerous regulatory proteins. Signaling is mediated via phospholipase C-beta-dependent inositol lipid hydrolysis for signal propagation: activates phospholipase C-beta: following GPCR activation, GNAQ activates PLC-beta (PLCB1, PLCB2, PLCB3 or PLCB4), leading to production of diacylglycerol (DAG) and inositol 1,4,5-trisphosphate (IP3). Required for platelet activation. Regulates B-cell selection and survival and is required to prevent B-cell-dependent autoimmunity. Regulates chemotaxis of BM-derived neutrophils and dendritic cells (in vitro). Transduces FFAR4 signaling in response to long-chain fatty acids (LCFAs). Together with GNA11, required for heart development. This is Guanine nucleotide-binding protein G(q) subunit alpha (Gnaq) from Rattus norvegicus (Rat).